The primary structure comprises 148 residues: Leghemoglobin-1 (148 aa).

Residues 2-146 (GFTDKQEALV…LATAIKKAMK (145 aa)) form the Globin domain. Nitrated tyrosine is present on residues Y24 and Y29. S44 contributes to the heme b binding site. S44 is modified (phosphoserine). H61 contacts O2. Residues H93 and K96 each contribute to the heme b site. Y134 bears the Nitrated tyrosine mark.

It belongs to the plant globin family. In terms of assembly, monomer. Post-translationally, nitrated in effective nodules and particularly in hypoxic conditions; this mechanism may play a protective role in the symbiosis by buffering toxic peroxynitrite NO(2)(-). Nitration level decrease during nodule senescence. In terms of processing, phosphorylation at Ser-44 disrupts the molecular environment of its porphyrin ring oxygen binding pocket, thus leading to a reduced oxygen consumption and to the delivery of oxygen O(2) to symbiosomes. In terms of tissue distribution, root nodules.

The protein resides in the cytoplasm. The protein localises to the cytosol. It localises to the nucleus. Functionally, leghemoglobin that reversibly binds oxygen O(2) through a pentacoordinated heme iron. In root nodules, facilitates the diffusion of oxygen to the bacteroids while preventing the bacterial nitrogenase from being inactivated by buffering dioxygen, nitric oxide and carbon monoxide, and promoting the formation of reactive oxygen species (ROS, e.g. H(2)O(2)). This role is essential for symbiotic nitrogen fixation (SNF). This chain is Leghemoglobin-1, found in Pisum sativum (Garden pea).